Here is a 251-residue protein sequence, read N- to C-terminus: MVDKSQETTHFGFQTVAKEQKADMVAHVFHSVASKYDVMNDLMSFGIHRLWKRFTIDCSGVRRGQTVLDLAGGTGDLTAKFSRLVGETGKVVLADINESMLKMGREKLRNIGVIGNVEYVQANAEALPFPDNTFDCITISFGLRNVTDKDKALRSMYRVLKPGGRLLVLEFSKPIIEPLSKAYDAYSFHVLPRIGSLVANDADSYRYLAESIRMHPDQDTLKAMMQDAGFESVDYYNLTAGVVALHRGYKF.

Residues T74, D95, 123–124 (NA), and S140 contribute to the S-adenosyl-L-methionine site.

Belongs to the class I-like SAM-binding methyltransferase superfamily. MenG/UbiE family.

The enzyme catalyses a 2-demethylmenaquinol + S-adenosyl-L-methionine = a menaquinol + S-adenosyl-L-homocysteine + H(+). It catalyses the reaction a 2-methoxy-6-(all-trans-polyprenyl)benzene-1,4-diol + S-adenosyl-L-methionine = a 5-methoxy-2-methyl-3-(all-trans-polyprenyl)benzene-1,4-diol + S-adenosyl-L-homocysteine + H(+). It participates in quinol/quinone metabolism; menaquinone biosynthesis; menaquinol from 1,4-dihydroxy-2-naphthoate: step 2/2. The protein operates within cofactor biosynthesis; ubiquinone biosynthesis. Functionally, methyltransferase required for the conversion of demethylmenaquinol (DMKH2) to menaquinol (MKH2) and the conversion of 2-polyprenyl-6-methoxy-1,4-benzoquinol (DDMQH2) to 2-polyprenyl-3-methyl-6-methoxy-1,4-benzoquinol (DMQH2). This Escherichia coli O9:H4 (strain HS) protein is Ubiquinone/menaquinone biosynthesis C-methyltransferase UbiE.